The primary structure comprises 290 residues: 33 kDa chaperonin (290 aa).

Disulfide bonds link cysteine 235/cysteine 237 and cysteine 268/cysteine 271.

This sequence belongs to the HSP33 family. Post-translationally, under oxidizing conditions two disulfide bonds are formed involving the reactive cysteines. Under reducing conditions zinc is bound to the reactive cysteines and the protein is inactive.

It is found in the cytoplasm. Its function is as follows. Redox regulated molecular chaperone. Protects both thermally unfolding and oxidatively damaged proteins from irreversible aggregation. Plays an important role in the bacterial defense system toward oxidative stress. This chain is 33 kDa chaperonin, found in Streptococcus mutans serotype c (strain ATCC 700610 / UA159).